The sequence spans 126 residues: Small ribosomal subunit protein uS13 (126 aa).

The interval 94–126 (RGLPVHGQRTSTNARTRKGPRRAIAGKKKPGKK) is disordered. A compositionally biased stretch (basic residues) spans 108-126 (RTRKGPRRAIAGKKKPGKK).

This sequence belongs to the universal ribosomal protein uS13 family. In terms of assembly, part of the 30S ribosomal subunit. Forms a loose heterodimer with protein S19. Forms two bridges to the 50S subunit in the 70S ribosome.

Located at the top of the head of the 30S subunit, it contacts several helices of the 16S rRNA. In the 70S ribosome it contacts the 23S rRNA (bridge B1a) and protein L5 of the 50S subunit (bridge B1b), connecting the 2 subunits; these bridges are implicated in subunit movement. Contacts the tRNAs in the A and P-sites. In Streptomyces avermitilis (strain ATCC 31267 / DSM 46492 / JCM 5070 / NBRC 14893 / NCIMB 12804 / NRRL 8165 / MA-4680), this protein is Small ribosomal subunit protein uS13.